The sequence spans 171 residues: 3-hydroxydecanoyl-[acyl-carrier-protein] dehydratase (171 aa).

The active site involves histidine 70.

It belongs to the thioester dehydratase family. FabA subfamily. Homodimer.

Its subcellular location is the cytoplasm. The enzyme catalyses a (3R)-hydroxyacyl-[ACP] = a (2E)-enoyl-[ACP] + H2O. It carries out the reaction (3R)-hydroxydecanoyl-[ACP] = (2E)-decenoyl-[ACP] + H2O. The catalysed reaction is (2E)-decenoyl-[ACP] = (3Z)-decenoyl-[ACP]. It functions in the pathway lipid metabolism; fatty acid biosynthesis. In terms of biological role, necessary for the introduction of cis unsaturation into fatty acids. Catalyzes the dehydration of (3R)-3-hydroxydecanoyl-ACP to E-(2)-decenoyl-ACP and then its isomerization to Z-(3)-decenoyl-ACP. Can catalyze the dehydratase reaction for beta-hydroxyacyl-ACPs with saturated chain lengths up to 16:0, being most active on intermediate chain length. The sequence is that of 3-hydroxydecanoyl-[acyl-carrier-protein] dehydratase from Pseudomonas putida (strain W619).